The chain runs to 277 residues: Large ribosomal subunit protein uL2 (277 aa).

Disordered regions lie at residues 1–23 (MAIKKYKPTSNGRRGMTSSDFAE), 36–58 (PLHKKGGRNNQGKLTVRHQGGGH), and 219–277 (TVRG…RKNK). Residues 8–20 (PTSNGRRGMTSSD) are compositionally biased toward polar residues. Positions 258–277 (KTRKKKNKSDKFIVRRRKNK) are enriched in basic residues.

Belongs to the universal ribosomal protein uL2 family. Part of the 50S ribosomal subunit. Forms a bridge to the 30S subunit in the 70S ribosome.

One of the primary rRNA binding proteins. Required for association of the 30S and 50S subunits to form the 70S ribosome, for tRNA binding and peptide bond formation. It has been suggested to have peptidyltransferase activity; this is somewhat controversial. Makes several contacts with the 16S rRNA in the 70S ribosome. The polypeptide is Large ribosomal subunit protein uL2 (Bacillus licheniformis (strain ATCC 14580 / DSM 13 / JCM 2505 / CCUG 7422 / NBRC 12200 / NCIMB 9375 / NCTC 10341 / NRRL NRS-1264 / Gibson 46)).